We begin with the raw amino-acid sequence, 216 residues long: MAQQDTDQQHTGVLPVDDDGFVIDAEDCEEREAAYRERGTSRPITVVGNPVLHKECKDVTDFGAELEQLVADMFASQRTAEGVGLAANQIGVDLKVFVYDCQDDEGTRHVGVVCNPKLVDLPADRRRLDDSNEGCLSVPTAYAPLARPDYAEVTGQDEKGNPIKVRGTGYFARCLQHETDHLYGYLYIDRLSKRERKDALRQMAENEPRYPVVAND.

Fe cation contacts are provided by C135 and H177. E178 is a catalytic residue. Position 181 (H181) interacts with Fe cation.

Belongs to the polypeptide deformylase family. Requires Fe(2+) as cofactor.

It carries out the reaction N-terminal N-formyl-L-methionyl-[peptide] + H2O = N-terminal L-methionyl-[peptide] + formate. Functionally, removes the formyl group from the N-terminal Met of newly synthesized proteins. Requires at least a dipeptide for an efficient rate of reaction. N-terminal L-methionine is a prerequisite for activity but the enzyme has broad specificity at other positions. In Streptomyces avermitilis (strain ATCC 31267 / DSM 46492 / JCM 5070 / NBRC 14893 / NCIMB 12804 / NRRL 8165 / MA-4680), this protein is Peptide deformylase 1.